We begin with the raw amino-acid sequence, 302 residues long: UDP-N-acetylenolpyruvoylglucosamine reductase (302 aa).

Residues 31–213 (KIGGPADFLI…KKIREFREKR (183 aa)) enclose the FAD-binding PCMH-type domain. Arg176 is a catalytic residue. Residue Ser226 is the Proton donor of the active site. The active site involves Glu296.

This sequence belongs to the MurB family. FAD is required as a cofactor.

The protein localises to the cytoplasm. The catalysed reaction is UDP-N-acetyl-alpha-D-muramate + NADP(+) = UDP-N-acetyl-3-O-(1-carboxyvinyl)-alpha-D-glucosamine + NADPH + H(+). It functions in the pathway cell wall biogenesis; peptidoglycan biosynthesis. In terms of biological role, cell wall formation. The sequence is that of UDP-N-acetylenolpyruvoylglucosamine reductase from Carboxydothermus hydrogenoformans (strain ATCC BAA-161 / DSM 6008 / Z-2901).